The sequence spans 579 residues: General transcriptional corepressor tupA (579 aa).

Polar residues predominate over residues 83-101 (NINASQRDLNSPSTFRSNS). Residues 83–258 (NINASQRDLN…ENGKEKGTDW (176 aa)) are disordered. Low complexity-rich tracts occupy residues 109–128 (NNNN…NNNN), 157–198 (QQPG…LSPL), and 207–224 (MGNN…NNNN). Residues 227 to 256 (KKPDMEEVKEEDRRRHDTEMSEENGKEKGT) show a composition bias toward basic and acidic residues. WD repeat units follow at residues 279-319 (QHNS…HAFV), 325-364 (DGDL…IQHT), 367-406 (GHEL…CAFT), 413-452 (GPKN…FLER), 455-494 (GHLD…SRSR), 501-540 (GHKD…THMM), and 543-579 (GHKN…KYDS).

It belongs to the WD repeat TUP1 family. As to quaternary structure, associates with trfA to form the trfA-tupA corepressor complex.

It is found in the nucleus. In terms of biological role, acts as a component of the trfA-tupA corepressor complex which is involved in the repression of many genes in a wide variety of physiological processes. May also be involved in the derepression of at least some target genes. The complex is recruited to target genes by interaction with DNA-bound transcriptional repressors. The complex recruits histone deacetylases to produce a repressive chromatin structure, interacts with hypoacetylated N-terminal tails of histones H3 and H4 that have been programmed for repression by the action of histone deacetylases and interferes directly with the transcriptional machinery by associating with the RNA polymerase II mediator complex. This is General transcriptional corepressor tupA (tupA) from Dictyostelium discoideum (Social amoeba).